A 683-amino-acid polypeptide reads, in one-letter code: U4/U6 small nuclear ribonucleoprotein Prp3 (683 aa).

Positions 1–87 constitute a PWI domain; the sequence is MALSKRELDE…HSKSSSDRSR (87 aa). Over residues 73–107 the composition is skewed to basic and acidic residues; it reads GRSSRHSKSSSDRSRKRELKEVFGDDSEISKESSG. The disordered stretch occupies residues 73–135; the sequence is GRSSRHSKSS…IPGPPSESPG (63 aa). Lys-139 participates in a covalent cross-link: Glycyl lysine isopeptide (Lys-Gly) (interchain with G-Cter in SUMO2). Residues 153–183 are disordered; the sequence is IEERKKQLSFISPPTPQPKTPSSSQPERLPI. Phosphoserine is present on Ser-164. Residue Thr-167 is modified to Phosphothreonine. Residues Lys-244 and Lys-252 each participate in a glycyl lysine isopeptide (Lys-Gly) (interchain with G-Cter in SUMO2) cross-link. Residues 416 to 550 form a mediates interaction with SART3 region; sequence NLVEHPAQLN…VHISVYRVRN (135 aa). Ser-619 is subject to Phosphoserine.

Component of the precatalytic spliceosome (spliceosome B complex). Component of the U4/U6-U5 tri-snRNP complex, a building block of the precatalytic spliceosome (spliceosome B complex). The U4/U6-U5 tri-snRNP complex is composed of the U4, U6 and U5 snRNAs and at least PRPF3, PRPF4, PRPF6, PRPF8, PRPF31, SNRNP200, TXNL4A, SNRNP40, SNRPB, SNRPD1, SNRPD2, SNRPD3, SNRPE, SNRPF, SNRPG, DDX23, CD2BP2, PPIH, SNU13, EFTUD2, SART1 and USP39, plus LSM2, LSM3, LSM4, LSM5, LSM6, LSM7 and LSM8. Interacts directly with PRPF4. Part of a heteromeric complex containing PPIH, PRPF3 and PRPF4 that is stable in the absence of RNA. Interacts with SART3; the interaction is direct and recruits the deubiquitinase USP4 to PRPF3. Interacts with PRPF19. Interacts ('Lys-63'-linked polyubiquitinated) with PRPF8 (via the MPN (JAB/Mov34) domain); may stabilize the U4/U6-U5 tri-snRNP complex. Interacts with ERCC6. In terms of processing, ubiquitinated. Undergoes 'Lys-63'-linked polyubiquitination by PRPF19 and deubiquitination by USP4. 'Lys-63'-linked ubiquitination increases the affinity for PRPF8 and may regulate the assembly of the U4/U6-U5 tri-snRNP complex.

The protein resides in the nucleus. It is found in the nucleus speckle. Plays a role in pre-mRNA splicing as component of the U4/U6-U5 tri-snRNP complex that is involved in spliceosome assembly, and as component of the precatalytic spliceosome (spliceosome B complex). The polypeptide is U4/U6 small nuclear ribonucleoprotein Prp3 (PRPF3) (Pongo abelii (Sumatran orangutan)).